A 387-amino-acid chain; its full sequence is Succinyl-diaminopimelate desuccinylase (387 aa).

Residue histidine 74 participates in Zn(2+) binding. Aspartate 76 is an active-site residue. Aspartate 107 provides a ligand contact to Zn(2+). Glutamate 142 functions as the Proton acceptor in the catalytic mechanism. Residues glutamate 143, glutamate 171, and histidine 360 each coordinate Zn(2+).

The protein belongs to the peptidase M20A family. DapE subfamily. In terms of assembly, homodimer. It depends on Zn(2+) as a cofactor. Co(2+) is required as a cofactor.

It carries out the reaction N-succinyl-(2S,6S)-2,6-diaminopimelate + H2O = (2S,6S)-2,6-diaminopimelate + succinate. Its pathway is amino-acid biosynthesis; L-lysine biosynthesis via DAP pathway; LL-2,6-diaminopimelate from (S)-tetrahydrodipicolinate (succinylase route): step 3/3. Its function is as follows. Catalyzes the hydrolysis of N-succinyl-L,L-diaminopimelic acid (SDAP), forming succinate and LL-2,6-diaminopimelate (DAP), an intermediate involved in the bacterial biosynthesis of lysine and meso-diaminopimelic acid, an essential component of bacterial cell walls. The chain is Succinyl-diaminopimelate desuccinylase from Rhodopseudomonas palustris (strain ATCC BAA-98 / CGA009).